Reading from the N-terminus, the 1122-residue chain is Protein phosphatase 1 regulatory subunit 3A (1122 aa).

Residues 32 to 58 form a disordered region; it reads TFQPGFSPQPSRRGSDSSEDIYLDTPS. Phosphoserine; by GSK3 is present on residues S38 and S42. Phosphoserine; by PKA and ISPK is present on S46. S49 carries the phosphoserine modification. At T56 the chain carries Phosphothreonine. The PP1-binding motif signature appears at 62 to 65; it reads RRVS. S65 carries the post-translational modification Phosphoserine; by PKA. In terms of domain architecture, CBM21 spans 122–230; sequence QLQIQKAILE…NNNGTNYTFI (109 aa). Disordered regions lie at residues 332 to 351, 395 to 422, 496 to 516, and 640 to 668; these read STASRDERNTFSTDPVNFPN, SSGDDCTHQPSEETTSNMGEIKPSLGDT, CLKESTEEGSSKEDYYGNGKD, and GINSEDQDNSPQHKQSWNVLESQGKSREN. Composition is skewed to basic and acidic residues over residues 395–405 and 499–516; these read SSGDDCTHQPS and ESTEEGSSKEDYYGNGKD. The segment covering 640-662 has biased composition (polar residues); that stretch reads GINSEDQDNSPQHKQSWNVLESQ. The residue at position 844 (S844) is a Phosphoserine. Positions 963–977 are enriched in basic and acidic residues; the sequence is IEKHPYPESKPEEVS. Disordered stretches follow at residues 963 to 983 and 1025 to 1058; these read IEKHPYPESKPEEVSRSSGIV and RHENEGLVSSGQSLYTSGEKESDSSASTSLPVEE. Composition is skewed to polar residues over residues 1031-1040 and 1048-1058; these read LVSSGQSLYT and SSASTSLPVEE. A helical transmembrane segment spans residues 1078–1098; it reads YFLLFLIFLITVYHYDLMIGL.

Interacts with PPP1CC catalytic subunit of PP1, and associates with glycogen. Phosphorylation at Ser-46 by ISPK stimulates the dephosphorylation of glycogen synthase and phosphorylase kinase. Skeletal muscle and heart.

It is found in the membrane. Functionally, seems to act as a glycogen-targeting subunit for PP1. PP1 is essential for cell division, and participates in the regulation of glycogen metabolism, muscle contractility and protein synthesis. Plays an important role in glycogen synthesis but is not essential for insulin activation of glycogen synthase. This Homo sapiens (Human) protein is Protein phosphatase 1 regulatory subunit 3A (PPP1R3A).